The following is a 371-amino-acid chain: Pyruvate dehydrogenase E1 component subunit alpha (371 aa).

As to quaternary structure, heterodimer of an alpha and a beta chain. It depends on thiamine diphosphate as a cofactor.

The catalysed reaction is N(6)-[(R)-lipoyl]-L-lysyl-[protein] + pyruvate + H(+) = N(6)-[(R)-S(8)-acetyldihydrolipoyl]-L-lysyl-[protein] + CO2. Activity of the E1 module is inhibited by the pyruvate dehydrogenase inhibitor PdhI. The pyruvate dehydrogenase complex catalyzes the overall conversion of pyruvate to acetyl-CoA and CO(2). It contains multiple copies of three enzymatic components: pyruvate dehydrogenase (E1), dihydrolipoamide acetyltransferase (E2) and lipoamide dehydrogenase (E3). Its function is as follows. The B.subtilis PDH complex also possesses branched-chain 2-oxoacid dehydrogenase (BCDH) activity. In Bacillus subtilis (strain 168), this protein is Pyruvate dehydrogenase E1 component subunit alpha.